The primary structure comprises 226 residues: Probable peroxiredoxin prdx-3 (226 aa).

One can recognise a Thioredoxin domain in the interval 33–191 (LGPKNTVPAF…TLRVLKAFQF (159 aa)). The active-site Cysteine sulfenic acid (-SOH) intermediate is the Cys-78.

This sequence belongs to the peroxiredoxin family. AhpC/Prx1 subfamily. Homodimer; disulfide-linked, upon oxidation.

It carries out the reaction a hydroperoxide + [thioredoxin]-dithiol = an alcohol + [thioredoxin]-disulfide + H2O. In terms of biological role, thiol-specific peroxidase that catalyzes the reduction of hydrogen peroxide and organic hydroperoxides to water and alcohols, respectively. Plays a role in cell protection against oxidative stress by detoxifying peroxides and as sensor of hydrogen peroxide-mediated signaling events. This is Probable peroxiredoxin prdx-3 (prdx-3) from Caenorhabditis elegans.